The sequence spans 71 residues: uncharacterized protein (71 aa).

Positions 1–26 (MIKFSVILGMIRCSLTHITTKNTVNA) are cleaved as a signal peptide.

This is an uncharacterized protein from Bacillus subtilis (strain 168).